Here is a 676-residue protein sequence, read N- to C-terminus: DNA ligase (676 aa).

NAD(+) is bound by residues 34 to 38 (DQEFD), 83 to 84 (SL), and glutamate 117. Lysine 119 functions as the N6-AMP-lysine intermediate in the catalytic mechanism. NAD(+)-binding residues include arginine 140, glutamate 177, lysine 285, and lysine 309. The Zn(2+) site is built by cysteine 403, cysteine 406, cysteine 427, and cysteine 434. In terms of domain architecture, BRCT spans 595-676 (NNNGLLKNKT…EWLKMLNKSG (82 aa)).

The protein belongs to the NAD-dependent DNA ligase family. LigA subfamily. Mg(2+) serves as cofactor. It depends on Mn(2+) as a cofactor.

The catalysed reaction is NAD(+) + (deoxyribonucleotide)n-3'-hydroxyl + 5'-phospho-(deoxyribonucleotide)m = (deoxyribonucleotide)n+m + AMP + beta-nicotinamide D-nucleotide.. DNA ligase that catalyzes the formation of phosphodiester linkages between 5'-phosphoryl and 3'-hydroxyl groups in double-stranded DNA using NAD as a coenzyme and as the energy source for the reaction. It is essential for DNA replication and repair of damaged DNA. This Pelagibacter ubique (strain HTCC1062) protein is DNA ligase.